Consider the following 1184-residue polypeptide: Kinesin-like protein bimC (1184 aa).

Over residues 1 to 11 (MAGPQRATSGL) the composition is skewed to polar residues. The segment at 1–64 (MAGPQRATSG…KSPGEPASVL (64 aa)) is disordered. Over residues 12 to 24 (PTRRTTTRQPTRR) the composition is skewed to low complexity. Polar residues predominate over residues 32–51 (RQTSTASPAVSTKTAAISRT). Residues 81 to 416 (SIHVVVRCRG…LDYAFRAKNI (336 aa)) form the Kinesin motor domain. Position 167–174 (167–174 (GQTGTGKT)) interacts with ATP. Positions 489-900 (SLRHKVQELL…TVRIVDVQVD (412 aa)) form a coiled coil. The globular stretch occupies residues 901 to 1184 (DMGRQMEALD…GRRLRGRPSP (284 aa)). Thr1006 bears the Phosphothreonine; by CDC2 mark. 2 disordered regions span residues 1041–1065 (PFNSDDQLSGPSSSPGGSPSKGFVY) and 1104–1184 (STGE…RPSP). A compositionally biased stretch (low complexity) spans 1049–1060 (SGPSSSPGGSPS).

The protein belongs to the TRAFAC class myosin-kinesin ATPase superfamily. Kinesin family. BimC subfamily.

The protein localises to the cytoplasm. Its subcellular location is the cytoskeleton. Functionally, important role in mitotic dividing cells. Microtubule motor required for spindle body separation. The polypeptide is Kinesin-like protein bimC (bimC) (Emericella nidulans (strain FGSC A4 / ATCC 38163 / CBS 112.46 / NRRL 194 / M139) (Aspergillus nidulans)).